The following is a 665-amino-acid chain: MLPEEKNTFYITTPIYYPSGKAHIGHAYTTVAGDAMARYKRLKGYDVFYLTGTDEHGQKIQAKAKERGISEQEYVDEIAEGFQELWKKLEISNTDFIRTTQDRHKTSVEKIFEQLLEQGDIYLGEYEGWYSVSDEEYFTETQLEEVYKDENGKVIGGKAPSGNEVELVKEESYFFRMSKYADRLVEYYNSHPEFILPESRKNEMINNFIKPGLEDLAVSRTTFDWGIKVPGNPKHVVYVWIDALSNYITALGYNTDNDTKFQKYWPADVQIVGKEIVRFHTIYWPIMLMALDLPLPKMVFGHGWILMKDGKMSKSKGNVVDPYMLIDRYGLDALRYYLLREVPFGSDGLFTPEDFVDRVNFDLANDLGNLLNRTVAMINKYFDGEIPAYQGNVTEFDQTLVDFKNNVVKEYEGSMDHMQFSVALNQLWSLISRTNKYIDETAPWTLAKDEDKRTELASVMTHLAENLRIIAVLLQPFLTRTPGEIFLQLGLQEENLKKWDSIYGYGEIPAGTTVVKKGTPIFPRLEAEVEVTYIQDEMKGSAPAPAKEAAEVEALETPQIGIEDFDKIDLRVAEVKQVDKVKKADKLLCFQLDLGEGKLRQVLSGIAEFYQPEELIGKKVIVVSNLKPVKLRGLMSEGMILSGEKDGKLSVIEASSALPNGAKVK.

The 'HIGH' region signature appears at 16 to 26; sequence YYPSGKAHIGH. The 'KMSKS' region signature appears at 311-315; sequence KMSKS. Lysine 314 serves as a coordination point for ATP. One can recognise a tRNA-binding domain in the interval 564 to 665; that stretch reads DFDKIDLRVA…SALPNGAKVK (102 aa).

It belongs to the class-I aminoacyl-tRNA synthetase family. MetG type 2B subfamily. Homodimer.

It is found in the cytoplasm. It catalyses the reaction tRNA(Met) + L-methionine + ATP = L-methionyl-tRNA(Met) + AMP + diphosphate. Its function is as follows. Is required not only for elongation of protein synthesis but also for the initiation of all mRNA translation through initiator tRNA(fMet) aminoacylation. This Listeria monocytogenes serotype 4b (strain F2365) protein is Methionine--tRNA ligase.